We begin with the raw amino-acid sequence, 198 residues long: Recombination protein RecR (198 aa).

The segment at 57 to 72 adopts a C4-type zinc-finger fold; that stretch reads CSVCGHITDTDPCYIC. The region spanning 80–175 is the Toprim domain; sequence SMICVVEETK…KVTRLAHGLP (96 aa).

This sequence belongs to the RecR family.

In terms of biological role, may play a role in DNA repair. It seems to be involved in an RecBC-independent recombinational process of DNA repair. It may act with RecF and RecO. This is Recombination protein RecR from Macrococcus caseolyticus (strain JCSC5402) (Macrococcoides caseolyticum).